We begin with the raw amino-acid sequence, 391 residues long: NAD(P)H-quinone oxidoreductase subunit H, chloroplastic (391 aa).

This sequence belongs to the complex I 49 kDa subunit family. In terms of assembly, NDH is composed of at least 16 different subunits, 5 of which are encoded in the nucleus.

The protein resides in the plastid. Its subcellular location is the chloroplast thylakoid membrane. The enzyme catalyses a plastoquinone + NADH + (n+1) H(+)(in) = a plastoquinol + NAD(+) + n H(+)(out). The catalysed reaction is a plastoquinone + NADPH + (n+1) H(+)(in) = a plastoquinol + NADP(+) + n H(+)(out). Its function is as follows. NDH shuttles electrons from NAD(P)H:plastoquinone, via FMN and iron-sulfur (Fe-S) centers, to quinones in the photosynthetic chain and possibly in a chloroplast respiratory chain. The immediate electron acceptor for the enzyme in this species is believed to be plastoquinone. Couples the redox reaction to proton translocation, and thus conserves the redox energy in a proton gradient. The chain is NAD(P)H-quinone oxidoreductase subunit H, chloroplastic from Chaetosphaeridium globosum (Charophycean green alga).